We begin with the raw amino-acid sequence, 426 residues long: Enolase (426 aa).

Glutamine 163 contacts (2R)-2-phosphoglycerate. Glutamate 205 acts as the Proton donor in catalysis. Mg(2+) is bound by residues aspartate 242, glutamate 285, and aspartate 312. (2R)-2-phosphoglycerate is bound by residues lysine 337, arginine 366, serine 367, and lysine 388. The active-site Proton acceptor is the lysine 337.

This sequence belongs to the enolase family. The cofactor is Mg(2+).

It is found in the cytoplasm. Its subcellular location is the secreted. The protein localises to the cell surface. The enzyme catalyses (2R)-2-phosphoglycerate = phosphoenolpyruvate + H2O. Its pathway is carbohydrate degradation; glycolysis; pyruvate from D-glyceraldehyde 3-phosphate: step 4/5. Functionally, catalyzes the reversible conversion of 2-phosphoglycerate (2-PG) into phosphoenolpyruvate (PEP). It is essential for the degradation of carbohydrates via glycolysis. The protein is Enolase of Caulobacter vibrioides (strain ATCC 19089 / CIP 103742 / CB 15) (Caulobacter crescentus).